The sequence spans 62 residues: MNRGSISSGTPGLFVGSMRNTPFVVKINVIFLKVISNTAVSVFWRDRRIRFESDWLNSYFQK.

This sequence belongs to the asfivirus C62L family.

This is an uncharacterized protein from African swine fever virus (isolate Tick/South Africa/Pretoriuskop Pr4/1996) (ASFV).